The primary structure comprises 251 residues: Uridylate kinase (251 aa).

19-22 (KLSG) is a binding site for ATP. A UMP-binding site is contributed by Gly61. Residues Gly62 and Arg66 each coordinate ATP. UMP contacts are provided by residues Asp81 and 142–149 (IGNPFFTT). ATP is bound by residues Thr169, Gln170, Tyr175, and Asp178.

It belongs to the UMP kinase family. Homohexamer.

The protein resides in the cytoplasm. The catalysed reaction is UMP + ATP = UDP + ADP. It participates in pyrimidine metabolism; CTP biosynthesis via de novo pathway; UDP from UMP (UMPK route): step 1/1. Inhibited by UTP. Functionally, catalyzes the reversible phosphorylation of UMP to UDP. The sequence is that of Uridylate kinase from Hyphomonas neptunium (strain ATCC 15444).